A 191-amino-acid polypeptide reads, in one-letter code: Lipid A 1-phosphatase (191 aa).

5 consecutive transmembrane segments (helical) span residues 22–42 (LLAL…PKVP), 60–80 (FIPT…VGLF), 117–137 (GNFN…AFLM), 145–162 (YLWL…RIYL), and 164–184 (MHTI…VGLF).

Belongs to the lipid A LpxE 1-phosphatase family.

The protein localises to the cell inner membrane. Its pathway is bacterial outer membrane biogenesis; LPS lipid A biosynthesis. In terms of biological role, removes the 1-phosphate group from tetra- and probably hexaacylated lipid A species. Absence of the 1-phosphate group renders the bacteria partially resistant to host-derived cationic antimicrobial peptides (CAMP), allowing it to camouflage itself from the host innate immune response, and plays a role in the long-term colonization of the host's stomach. The protein is Lipid A 1-phosphatase of Helicobacter pylori (strain J99 / ATCC 700824) (Campylobacter pylori J99).